The following is a 314-amino-acid chain: DNA-directed RNA polymerase subunit alpha (314 aa).

The alpha N-terminal domain (alpha-NTD) stretch occupies residues 1-228 (MIEIEKPKIE…EHLSIFVNLT (228 aa)). The segment at 245 to 314 (KEKVLEMTIE…DLGLSLRNEN (70 aa)) is alpha C-terminal domain (alpha-CTD).

It belongs to the RNA polymerase alpha chain family. Homodimer. The RNAP catalytic core consists of 2 alpha, 1 beta, 1 beta' and 1 omega subunit. When a sigma factor is associated with the core the holoenzyme is formed, which can initiate transcription.

It catalyses the reaction RNA(n) + a ribonucleoside 5'-triphosphate = RNA(n+1) + diphosphate. DNA-dependent RNA polymerase catalyzes the transcription of DNA into RNA using the four ribonucleoside triphosphates as substrates. In Listeria innocua serovar 6a (strain ATCC BAA-680 / CLIP 11262), this protein is DNA-directed RNA polymerase subunit alpha.